Here is a 286-residue protein sequence, read N- to C-terminus: D-tagatose-1,6-bisphosphate aldolase subunit KbaY (286 aa).

Asp82 serves as the catalytic Proton donor. His83 and His180 together coordinate Zn(2+). Gly181 serves as a coordination point for dihydroxyacetone phosphate. His208 provides a ligand contact to Zn(2+). Dihydroxyacetone phosphate is bound by residues 209–211 and 230–233; these read GAS and NVAT.

This sequence belongs to the class II fructose-bisphosphate aldolase family. TagBP aldolase KbaY subfamily. As to quaternary structure, homotetramer. Forms a complex with KbaZ. It depends on Zn(2+) as a cofactor.

The catalysed reaction is D-tagatofuranose 1,6-bisphosphate = D-glyceraldehyde 3-phosphate + dihydroxyacetone phosphate. Its pathway is carbohydrate metabolism; D-tagatose 6-phosphate degradation; D-glyceraldehyde 3-phosphate and glycerone phosphate from D-tagatose 6-phosphate: step 2/2. Catalytic subunit of the tagatose-1,6-bisphosphate aldolase KbaYZ, which catalyzes the reversible aldol condensation of dihydroxyacetone phosphate (DHAP or glycerone-phosphate) with glyceraldehyde 3-phosphate (G3P) to produce tagatose 1,6-bisphosphate (TBP). Requires KbaZ subunit for full activity and stability. The chain is D-tagatose-1,6-bisphosphate aldolase subunit KbaY from Escherichia coli O17:K52:H18 (strain UMN026 / ExPEC).